The following is a 448-amino-acid chain: Exodeoxyribonuclease 7 large subunit (448 aa).

This sequence belongs to the XseA family. In terms of assembly, heterooligomer composed of large and small subunits.

The protein resides in the cytoplasm. It catalyses the reaction Exonucleolytic cleavage in either 5'- to 3'- or 3'- to 5'-direction to yield nucleoside 5'-phosphates.. In terms of biological role, bidirectionally degrades single-stranded DNA into large acid-insoluble oligonucleotides, which are then degraded further into small acid-soluble oligonucleotides. The protein is Exodeoxyribonuclease 7 large subunit of Exiguobacterium sp. (strain ATCC BAA-1283 / AT1b).